Reading from the N-terminus, the 664-residue chain is Transketolase 1 (664 aa).

Residue His26 participates in substrate binding. Thiamine diphosphate-binding positions include His66 and 114-116 (GPL). A Mg(2+)-binding site is contributed by Asp155. Thiamine diphosphate is bound by residues Gly156 and Asn185. Mg(2+) is bound by residues Asn185 and Ile187. 3 residues coordinate substrate: His260, Arg357, and Ser384. His260 contacts thiamine diphosphate. Glu411 functions as the Proton donor in the catalytic mechanism. Phe437 serves as a coordination point for thiamine diphosphate. Substrate-binding residues include His461, Asp469, and Arg520.

Belongs to the transketolase family. As to quaternary structure, homodimer. The cofactor is Mg(2+). Ca(2+) is required as a cofactor. Requires Mn(2+) as cofactor. It depends on Co(2+) as a cofactor. Thiamine diphosphate serves as cofactor.

It carries out the reaction D-sedoheptulose 7-phosphate + D-glyceraldehyde 3-phosphate = aldehydo-D-ribose 5-phosphate + D-xylulose 5-phosphate. Catalyzes the transfer of a two-carbon ketol group from a ketose donor to an aldose acceptor, via a covalent intermediate with the cofactor thiamine pyrophosphate. This is Transketolase 1 (tkt1) from Aliivibrio fischeri (strain ATCC 700601 / ES114) (Vibrio fischeri).